Consider the following 90-residue polypeptide: Progonadoliberin-1 (90 aa).

Positions 1 to 21 (MILKLMAGILLLTVCLEGCSS) are cleaved as a signal peptide. Residue glutamine 22 is modified to Pyrrolidone carboxylic acid. Glycine 31 carries the glycine amide modification.

It belongs to the GnRH family. In terms of processing, the precursor is cleaved by ACE, which removes the Gly-Lys-Arg peptide at the C-terminus, leading to mature hormone. The mature form of Gonadoliberin-1 is also cleaved and degraded by ACE.

It is found in the secreted. Stimulates the secretion of gonadotropins; it stimulates the secretion of both luteinizing and follicle-stimulating hormones. This is Progonadoliberin-1 (Gnrh1) from Mus musculus (Mouse).